The sequence spans 124 residues: Small ribosomal subunit protein uS12 (124 aa).

Asp89 bears the 3-methylthioaspartic acid mark. A disordered region spans residues 103 to 124 (DTAGVKDRRQSRSKYGAKSPKE).

Belongs to the universal ribosomal protein uS12 family. Part of the 30S ribosomal subunit. Contacts proteins S8 and S17. May interact with IF1 in the 30S initiation complex.

Its function is as follows. With S4 and S5 plays an important role in translational accuracy. Interacts with and stabilizes bases of the 16S rRNA that are involved in tRNA selection in the A site and with the mRNA backbone. Located at the interface of the 30S and 50S subunits, it traverses the body of the 30S subunit contacting proteins on the other side and probably holding the rRNA structure together. The combined cluster of proteins S8, S12 and S17 appears to hold together the shoulder and platform of the 30S subunit. This is Small ribosomal subunit protein uS12 from Prochlorococcus marinus (strain NATL1A).